We begin with the raw amino-acid sequence, 344 residues long: Holliday junction branch migration complex subunit RuvB (344 aa).

Positions 1–25 (MTDSDPTLRPDRLPEDVQATDDRAL) are enriched in basic and acidic residues. The interval 1–33 (MTDSDPTLRPDRLPEDVQATDDRALRPQSLDDF) is disordered. Residues 1–186 (MTDSDPTLRP…FGIPTRLNFY (186 aa)) form a large ATPase domain (RuvB-L) region. ATP is bound by residues Leu25, Arg26, Gly67, Lys70, Thr71, Thr72, 133–135 (EDF), Arg176, Tyr186, and Arg223. Residue Thr71 participates in Mg(2+) binding. The segment at 187 to 257 (TIAELDQIVA…IADSALTRLG (71 aa)) is small ATPAse domain (RuvB-S). The segment at 260-344 (DLGLDGADRR…PKRPDQGELI (85 aa)) is head domain (RuvB-H). DNA-binding residues include Arg296, Arg315, and Arg320.

The protein belongs to the RuvB family. In terms of assembly, homohexamer. Forms an RuvA(8)-RuvB(12)-Holliday junction (HJ) complex. HJ DNA is sandwiched between 2 RuvA tetramers; dsDNA enters through RuvA and exits via RuvB. An RuvB hexamer assembles on each DNA strand where it exits the tetramer. Each RuvB hexamer is contacted by two RuvA subunits (via domain III) on 2 adjacent RuvB subunits; this complex drives branch migration. In the full resolvosome a probable DNA-RuvA(4)-RuvB(12)-RuvC(2) complex forms which resolves the HJ.

Its subcellular location is the cytoplasm. The enzyme catalyses ATP + H2O = ADP + phosphate + H(+). The RuvA-RuvB-RuvC complex processes Holliday junction (HJ) DNA during genetic recombination and DNA repair, while the RuvA-RuvB complex plays an important role in the rescue of blocked DNA replication forks via replication fork reversal (RFR). RuvA specifically binds to HJ cruciform DNA, conferring on it an open structure. The RuvB hexamer acts as an ATP-dependent pump, pulling dsDNA into and through the RuvAB complex. RuvB forms 2 homohexamers on either side of HJ DNA bound by 1 or 2 RuvA tetramers; 4 subunits per hexamer contact DNA at a time. Coordinated motions by a converter formed by DNA-disengaged RuvB subunits stimulates ATP hydrolysis and nucleotide exchange. Immobilization of the converter enables RuvB to convert the ATP-contained energy into a lever motion, pulling 2 nucleotides of DNA out of the RuvA tetramer per ATP hydrolyzed, thus driving DNA branch migration. The RuvB motors rotate together with the DNA substrate, which together with the progressing nucleotide cycle form the mechanistic basis for DNA recombination by continuous HJ branch migration. Branch migration allows RuvC to scan DNA until it finds its consensus sequence, where it cleaves and resolves cruciform DNA. The protein is Holliday junction branch migration complex subunit RuvB of Jannaschia sp. (strain CCS1).